The primary structure comprises 89 residues: DNA/RNA-binding protein Alba 2 (89 aa).

Belongs to the histone-like Alba family. Forms homodimers and homotetramers. Interacts with Alba 1.

The protein localises to the cytoplasm. Its subcellular location is the chromosome. In terms of biological role, binds double-stranded DNA tightly but without sequence specificity. Involved in DNA compaction. The polypeptide is DNA/RNA-binding protein Alba 2 (Archaeoglobus fulgidus (strain ATCC 49558 / DSM 4304 / JCM 9628 / NBRC 100126 / VC-16)).